Consider the following 55-residue polypeptide: KEGYIVNYHDGCKYECYKLGDNDYCLRECKLRVGKGAGGYCYAFACWCTHLYEQA.

The region spanning 1-55 (KEGYIVNYHDGCKYECYKLGDNDYCLRECKLRVGKGAGGYCYAFACWCTHLYEQA) is the LCN-type CS-alpha/beta domain. 3 disulfide bridges follow: Cys-16–Cys-41, Cys-25–Cys-46, and Cys-29–Cys-48.

The protein belongs to the long (3 C-C) scorpion toxin superfamily. Sodium channel inhibitor family. Beta subfamily. As to expression, expressed by the venom gland.

The protein localises to the secreted. Beta toxins bind voltage-independently at site-4 of sodium channels (Nav) and shift the voltage of activation toward more negative potentials thereby affecting sodium channel activation and promoting spontaneous and repetitive firing. This chain is Beta-toxin Cn7, found in Centruroides noxius (Mexican scorpion).